Here is a 169-residue protein sequence, read N- to C-terminus: MWRVPVLLLVLGGAGLRVPAAGASTVRPDDIIPGVEDSVVTPGTEDSVVTPGAEDNVVTDGATEEPYESGLTPLVTKNTESVTDLHLEDGPTQESTVHAKEESQSTTTLNVVTSHSREKVGEDTETTVEKDGLATVTLVGIIVGVLLAIGFIGGIIIVVARKMSGRYSP.

A signal peptide spans 1-22; it reads MWRVPVLLLVLGGAGLRVPAAG. The Extracellular portion of the chain corresponds to 23 to 138; it reads ASTVRPDDII…EKDGLATVTL (116 aa). The O-linked (GalNAc...) threonine glycan is linked to T25. The tract at residues 37-69 is disordered; sequence DSVVTPGTEDSVVTPGAEDNVVTDGATEEPYES. S38 carries O-linked (GalNAc...) serine glycosylation. 2 O-linked (GalNAc...) threonine glycosylation sites follow: T41 and T44. A glycan (O-linked (GalNAc...) serine) is linked at S47. Residues T50, T59, T63, T72, T76, T79, T83, T92, T96, T106, T107, T108, T113, T126, and T127 are each glycosylated (O-linked (GalNAc...) threonine). Residues 139 to 159 form a helical membrane-spanning segment; that stretch reads VGIIVGVLLAIGFIGGIIIVV. The segment at 140 to 144 is requires for dimerization and lipid rafts association; it reads GIIVG. The Cytoplasmic segment spans residues 160–169; it reads ARKMSGRYSP. The tract at residues 161 to 162 is requires for interaction with MSN and EZR; that stretch reads RK.

The protein belongs to the podoplanin family. Homodimer. Interacts with CLEC1B; the interaction is independent of CLEC1B glycosylation and activates CLEC1B; the interaction is dependent of sialic acid on O-glycans. Interacts with CD9; this interaction is homophilic and attenuates platelet aggregation and pulmonary metastasis induced by PDPN. Interacts with LGALS8; the interaction is glycosylation-dependent; may participate in connection of the lymphatic endothelium to the surrounding extracellular matrix. Interacts with HSPA9. Interacts (via extracellular domain) with CD44; this interaction is required for PDPN-mediated directional migration and regulation of lamellipodia extension/stabilization during cell spreading and migration. Interacts (via cytoplasmic domain) with MSN and EZR; activates RHOA and promotes epithelial-mesenchymal transition. Interacts with CCL21; relocalized PDPN to the basolateral membrane. In terms of processing, extensively O-glycosylated. Contains sialic acid residues. O-glycosylation is necessary for platelet aggregation activity. Disialylated at Thr-59; sialic acid is critical for platelet-aggregating activity and for CLEC1B interaction. Post-translationally, the N-terminus is blocked.

It localises to the membrane. The protein resides in the cell projection. Its subcellular location is the filopodium membrane. The protein localises to the lamellipodium membrane. It is found in the microvillus membrane. It localises to the ruffle membrane. The protein resides in the membrane raft. Its subcellular location is the apical cell membrane. The protein localises to the basolateral cell membrane. It is found in the invadopodium. Functionally, mediates effects on cell migration and adhesion through its different partners. During development plays a role in blood and lymphatic vessels separation by binding CLEC1B, triggering CLEC1B activation in platelets and leading to platelet activation and/or aggregation. Interaction with CD9, on the contrary, attenuates platelet aggregation and pulmonary metastasis induced by PDPN. Mediates effects on cell migration and adhesion through its different partners. Through MSN or EZR interaction promotes epithelial-mesenchymal transition (EMT) leading to ERZ phosphorylation and triggering RHOA activation leading to cell migration increase and invasiveness. Interaction with CD44 promotes directional cell migration in epithelial and tumor cells. In lymph nodes (LNs), controls fibroblastic reticular cells (FRCs) adhesion to the extracellular matrix (ECM) and contraction of the actomyosin by maintaining ERM proteins (EZR; MSN and RDX) and MYL9 activation through association with unknown transmembrane proteins. Engagement of CLEC1B by PDPN promotes FRCs relaxation by blocking lateral membrane interactions leading to reduction of ERM proteins (EZR; MSN and RDX) and MYL9 activation. Through binding with LGALS8 may participate in connection of the lymphatic endothelium to the surrounding extracellular matrix. In keratinocytes, induces changes in cell morphology showing an elongated shape, numerous membrane protrusions, major reorganization of the actin cytoskeleton, increased motility and decreased cell adhesion. Controls invadopodia stability and maturation leading to efficient degradation of the extracellular matrix (ECM) in tumor cells through modulation of RHOC activity in order to activate ROCK1/ROCK2 and LIMK1/LIMK2 and inactivation of CFL1. Required for normal lung cell proliferation and alveolus formation at birth. Does not function as a water channel or as a regulator of aquaporin-type water channels. Does not have any effect on folic acid or amino acid transport. This Canis lupus familiaris (Dog) protein is Podoplanin (PDPN).